A 336-amino-acid polypeptide reads, in one-letter code: Phosphate acyltransferase (336 aa).

The protein belongs to the PlsX family. In terms of assembly, homodimer. Probably interacts with PlsY.

It localises to the cytoplasm. The catalysed reaction is a fatty acyl-[ACP] + phosphate = an acyl phosphate + holo-[ACP]. It functions in the pathway lipid metabolism; phospholipid metabolism. Functionally, catalyzes the reversible formation of acyl-phosphate (acyl-PO(4)) from acyl-[acyl-carrier-protein] (acyl-ACP). This enzyme utilizes acyl-ACP as fatty acyl donor, but not acyl-CoA. In Pseudomonas putida (strain GB-1), this protein is Phosphate acyltransferase.